A 335-amino-acid polypeptide reads, in one-letter code: MAKINVLLLCGGGGAEHDISLMSARFFETSLAKSDQFSVLTLTLDKQGRYHTQDGNLCSLTNRREIRFEDPSIAPWAVDYVIPCIHGFPGETGDIQSYFNLIQLPYFGCESEASSNCFNKITAKMWFSALGVPNTPYIFLHQFDQEAIAQTQAAFDTWGSVFIKAASQGSSVGCYKVDVRDNIAKVLEEAFGYAPYVVVEKTIKARELEVAVYEYQGDIIATLPGEIICDTNKFYSFDEKYAKDSKARTDVVASNLSPKLCLQIQDYAIKAFKGMKLRHLSRIDFFLTQDDEILLNEINTFPGLTPISMFPKMLQNHGHDFTEYLSDVISQQLGR.

Residues 124-330 (KMWFSALGVP…FTEYLSDVIS (207 aa)) enclose the ATP-grasp domain. An ATP-binding site is contributed by 154 to 209 (AFDTWGSVFIKAASQGSSVGCYKVDVRDNIAKVLEEAFGYAPYVVVEKTIKARELE). Mg(2+) is bound by residues aspartate 284, glutamate 297, and asparagine 299.

Belongs to the D-alanine--D-alanine ligase family. The cofactor is Mg(2+). Mn(2+) serves as cofactor.

The protein resides in the cytoplasm. It carries out the reaction 2 D-alanine + ATP = D-alanyl-D-alanine + ADP + phosphate + H(+). It functions in the pathway cell wall biogenesis; peptidoglycan biosynthesis. Functionally, cell wall formation. This Shewanella denitrificans (strain OS217 / ATCC BAA-1090 / DSM 15013) protein is D-alanine--D-alanine ligase.